Consider the following 438-residue polypeptide: Protein translocase subunit SecY (438 aa).

The next 10 helical transmembrane spans lie at 18–38, 76–96, 121–141, 154–174, 177–197, 212–232, 269–289, 315–335, 375–395, and 398–418; these read ILFT…PSPG, VGVM…VVIP, IALA…GGLL, IFSL…VMWM, LITE…GIAA, GVIF…VVFV, VIPV…TQLV, PVYI…YVSV, LPGS…LQIG, and GEVQ…GVGL.

This sequence belongs to the SecY/SEC61-alpha family. Component of the Sec protein translocase complex. Heterotrimer consisting of SecY, SecE and SecG subunits. The heterotrimers can form oligomers, although 1 heterotrimer is thought to be able to translocate proteins. Interacts with the ribosome. Interacts with SecDF, and other proteins may be involved. Interacts with SecA.

It localises to the cell membrane. Its function is as follows. The central subunit of the protein translocation channel SecYEG. Consists of two halves formed by TMs 1-5 and 6-10. These two domains form a lateral gate at the front which open onto the bilayer between TMs 2 and 7, and are clamped together by SecE at the back. The channel is closed by both a pore ring composed of hydrophobic SecY resides and a short helix (helix 2A) on the extracellular side of the membrane which forms a plug. The plug probably moves laterally to allow the channel to open. The ring and the pore may move independently. In Mycobacterium leprae (strain TN), this protein is Protein translocase subunit SecY.